The sequence spans 881 residues: MRNVLRLLFLTAFVAIGSLAAVLGVDYGQQNIKAIVVSPQAPLELVLTPEAKRKEISGLSIKRLPGYGKDDPNGIERIYGSAVGSLATRFPQNTLLHLKPLLGKSLEDETTVTLYSKQHPGLEMVSTNRSTIAFLVDNVEYPLEELVAMNVQEIANRANSLLKDRDARTEDFVNKMSFTIPDFFDQHQRKALLDASSITTGIEETYLVSEGMSVAVNFVLKQRQFPPGEQQHYIVYDMGSGSIKASMFSILQPEDTTQPVTIEFEGYGYNPHLGGAKFTMDIGSLIENKFLETHPAIRTDELHANPKALAKINQAAEKAKLILSANSEASINIESLINDIDFRTSITRQEFEEFIADSLLDIVKPINDAVTKQFGGYGTNLPEINGVILAGGSSRIPIVQDQLIKLVSEEKVLRNVNADESAVNGVVMRGIKLSNSFKTKPLNVVDRSVNTYSFKLSNESELYDVFTRGSAYPNKTSILTNTTDSIPNNFTIDLFENGKLFETITVNSGAIKNSYSSDKCSSGVAYNITFDLSSDRLFSIQEVNCICQSENDIGNSKQIKNKGSRLAFTSEDVEIKRLSPSERSRLHEHIKLLDKQDKERFQFQENLNVLESNLYDARNLLMDDEVMQNGPKSQVEELSEMVKVYLDWLEDASFDTDPEDIVSRIREIGILKKKIELYMDSAKEPLNSQQFKGMLEEGHKLLQAIETHKNTVEEFLSQFETEFADTIDNVREEFKKIKQPAYVSKALSTWEETLTSFKNSISEIEKFLAKNLFGEDLREHLFEIKLQFDMYRTKLEEKLRLIKSGDESRLNEIKKLHLRNFRLQKRKEEKLKRKLEQEKSRNNNETESTVINSADDKTTIVNDKTTESNPSSEEDILHDEL.

An N-terminal signal peptide occupies residues 1-20 (MRNVLRLLFLTAFVAIGSLA). 7 N-linked (GlcNAc...) asparagine glycosylation sites follow: asparagine 128, asparagine 458, asparagine 474, asparagine 481, asparagine 489, asparagine 527, and asparagine 844. Over residues 833-844 (RKLEQEKSRNNN) the composition is skewed to basic and acidic residues. Residues 833–881 (RKLEQEKSRNNNETESTVINSADDKTTIVNDKTTESNPSSEEDILHDEL) form a disordered region. Over residues 859 to 871 (TIVNDKTTESNPS) the composition is skewed to polar residues. Acidic residues predominate over residues 872–881 (SEEDILHDEL). The Prevents secretion from ER motif lies at 878–881 (HDEL).

Belongs to the heat shock protein 70 family. In terms of assembly, interacts with the heat shock protein 70 (HSP70) KAR2, and this stimulates nucleotide exchange on KAR2. KAR2 in turn acts to stimulate the ATPase activity of LHS1. In terms of processing, N-glycosylated.

The protein localises to the endoplasmic reticulum lumen. The enzyme catalyses ATP + H2O = ADP + phosphate + H(+). Its function is as follows. Chaperone required for protein translocation and folding in the endoplasmic reticulum. In Saccharomyces cerevisiae (strain ATCC 204508 / S288c) (Baker's yeast), this protein is Heat shock protein 70 homolog LHS1 (LHS1).